Reading from the N-terminus, the 612-residue chain is 1,8-cineole synthase, chloroplastic (612 aa).

The transit peptide at 1–52 directs the protein to the chloroplast; that stretch reads MALVSVAPLASRSCLSKSLISSTHELKPLRRTILPTLRWKSATPSINMCLTT. The Mg(2+) site is built by D363, D367, and D515. Residues 363–367 carry the DDXXD motif motif; sequence DDIYD.

It belongs to the terpene synthase family. Tpsd subfamily. Mg(2+) is required as a cofactor. Requires Mn(2+) as cofactor.

The protein resides in the plastid. It localises to the chloroplast. It carries out the reaction (2E)-geranyl diphosphate + H2O = 1,8-cineole + diphosphate. It participates in terpene metabolism; oleoresin biosynthesis. Terpene synthase (TPS) involved in the biosynthesis of monoterpene natural products included in conifer oleoresin secretions and volatile emissions; these compounds contribute to biotic and abiotic stress defense against herbivores and pathogens. Catalyzes the conversion of (2E)-geranyl diphosphate (GPP) to 1,8-cineole. The polypeptide is 1,8-cineole synthase, chloroplastic (Picea sitchensis (Sitka spruce)).